Consider the following 316-residue polypeptide: Cytochrome c biogenesis protein CcsA (316 aa).

A run of 8 helical transmembrane segments spans residues 9–29 (IFVN…LINL), 39–61 (FSKN…RYLQ), 70–90 (LYES…ILEV), 94–114 (IGLS…FATL), 143–163 (LISY…LSLF), 224–244 (TISL…VWAN), 257–271 (ETWA…AIYL), and 289–309 (SMGF…GVGL).

Belongs to the CcmF/CycK/Ccl1/NrfE/CcsA family. As to quaternary structure, may interact with Ccs1.

It is found in the plastid. It localises to the chloroplast thylakoid membrane. Functionally, required during biogenesis of c-type cytochromes (cytochrome c6 and cytochrome f) at the step of heme attachment. This chain is Cytochrome c biogenesis protein CcsA, found in Adiantum capillus-veneris (Maidenhair fern).